Consider the following 510-residue polypeptide: D-alanine--D-alanyl carrier protein ligase (510 aa).

An ATP-binding site is contributed by 157–158 (TS). A D-alanine-binding site is contributed by Asp-202. 297 to 302 (NTYGPT) is a binding site for ATP. Val-306 is a D-alanine binding site. 2 residues coordinate ATP: Asp-389 and Lys-498. Lys-498 is a binding site for D-alanine.

The protein belongs to the ATP-dependent AMP-binding enzyme family. DltA subfamily.

Its subcellular location is the cytoplasm. It catalyses the reaction holo-[D-alanyl-carrier protein] + D-alanine + ATP = D-alanyl-[D-alanyl-carrier protein] + AMP + diphosphate. The protein operates within cell wall biogenesis; lipoteichoic acid biosynthesis. Its function is as follows. Catalyzes the first step in the D-alanylation of lipoteichoic acid (LTA), the activation of D-alanine and its transfer onto the D-alanyl carrier protein (Dcp) DltC. In an ATP-dependent two-step reaction, forms a high energy D-alanyl-AMP intermediate, followed by transfer of the D-alanyl residue as a thiol ester to the phosphopantheinyl prosthetic group of the Dcp. D-alanylation of LTA plays an important role in modulating the properties of the cell wall in Gram-positive bacteria, influencing the net charge of the cell wall. The polypeptide is D-alanine--D-alanyl carrier protein ligase (Listeria innocua serovar 6a (strain ATCC BAA-680 / CLIP 11262)).